Consider the following 378-residue polypeptide: tRNA-specific 2-thiouridylase MnmA (378 aa).

ATP-binding positions include 6-13 and L32; that span reads AMSGGVDS. C101 functions as the Nucleophile in the catalytic mechanism. A disulfide bond links C101 and C199. An ATP-binding site is contributed by G125. The segment at 148-150 is interaction with tRNA; sequence KDQ. C199 functions as the Cysteine persulfide intermediate in the catalytic mechanism.

This sequence belongs to the MnmA/TRMU family.

The protein resides in the cytoplasm. It carries out the reaction S-sulfanyl-L-cysteinyl-[protein] + uridine(34) in tRNA + AH2 + ATP = 2-thiouridine(34) in tRNA + L-cysteinyl-[protein] + A + AMP + diphosphate + H(+). Catalyzes the 2-thiolation of uridine at the wobble position (U34) of tRNA, leading to the formation of s(2)U34. This is tRNA-specific 2-thiouridylase MnmA from Micrococcus luteus (strain ATCC 4698 / DSM 20030 / JCM 1464 / CCM 169 / CCUG 5858 / IAM 1056 / NBRC 3333 / NCIMB 9278 / NCTC 2665 / VKM Ac-2230) (Micrococcus lysodeikticus).